The chain runs to 97 residues: Co-chaperonin GroES (97 aa).

Belongs to the GroES chaperonin family. In terms of assembly, heptamer of 7 subunits arranged in a ring. Interacts with the chaperonin GroEL.

It is found in the cytoplasm. Together with the chaperonin GroEL, plays an essential role in assisting protein folding. The GroEL-GroES system forms a nano-cage that allows encapsulation of the non-native substrate proteins and provides a physical environment optimized to promote and accelerate protein folding. GroES binds to the apical surface of the GroEL ring, thereby capping the opening of the GroEL channel. This chain is Co-chaperonin GroES, found in Arthrobacter sp. (strain FB24).